We begin with the raw amino-acid sequence, 163 residues long: uncharacterized protein (163 aa).

The disordered stretch occupies residues 1–54 (MGKSARLRRSQTSSPENVLLGKDSSDDPYRSDSETESNSSSGTESNMSSDSTTS). Residues 23–33 (DSSDDPYRSDS) show a composition bias toward basic and acidic residues. Residues 36–52 (ESNSSSGTESNMSSDST) are compositionally biased toward low complexity. The stretch at 69-143 (LRTELAEMEM…VEELESSTRE (75 aa)) forms a coiled coil.

This is an uncharacterized protein from Arabidopsis thaliana (Mouse-ear cress).